The sequence spans 92 residues: Defensin-like protein 96 (92 aa).

The N-terminal stretch at 1 to 29 (MGSLRLSTVAIAVVVCLSILLISPTEVDG) is a signal peptide. 4 cysteine pairs are disulfide-bonded: Cys-33-Cys-80, Cys-40-Cys-65, Cys-49-Cys-77, and Cys-53-Cys-79.

The protein belongs to the DEFL family.

The protein localises to the secreted. The sequence is that of Defensin-like protein 96 from Arabidopsis thaliana (Mouse-ear cress).